The sequence spans 162 residues: NADH-quinone oxidoreductase subunit I (162 aa).

4Fe-4S ferredoxin-type domains are found at residues Arg54–Glu83 and Thr93–Ile122. Residues Cys63, Cys66, Cys69, Cys73, Cys102, Cys105, Cys108, and Cys112 each contribute to the [4Fe-4S] cluster site.

The protein belongs to the complex I 23 kDa subunit family. As to quaternary structure, NDH-1 is composed of 14 different subunits. Subunits NuoA, H, J, K, L, M, N constitute the membrane sector of the complex. The cofactor is [4Fe-4S] cluster.

It localises to the cell inner membrane. It carries out the reaction a quinone + NADH + 5 H(+)(in) = a quinol + NAD(+) + 4 H(+)(out). Its function is as follows. NDH-1 shuttles electrons from NADH, via FMN and iron-sulfur (Fe-S) centers, to quinones in the respiratory chain. The immediate electron acceptor for the enzyme in this species is believed to be ubiquinone. Couples the redox reaction to proton translocation (for every two electrons transferred, four hydrogen ions are translocated across the cytoplasmic membrane), and thus conserves the redox energy in a proton gradient. This is NADH-quinone oxidoreductase subunit I from Burkholderia mallei (strain NCTC 10247).